We begin with the raw amino-acid sequence, 88 residues long: Insulin-related peptide 4 (88 aa).

A signal peptide spans 1 to 19 (MKLTLIILLVVAYSWCSEA). A propeptide spanning residues 20-45 (QNEARVFCGRVLSERLAALCWGPNSV) is cleaved from the precursor. Arg65 is subject to Arginine amide. A propeptide spanning residues 69-88 (GLATECCDKACTVEELLSYC) is cleaved from the precursor.

The protein belongs to the insulin family. In terms of tissue distribution, DAGWWLTRGAARSLGGVR-amide: Expressed in corpora cardiaca (CC), corpora allata (CA), antennal lobe (AL) and gnathal ganglion (GNG) (at protein level). Expression in CC and CA detected in most animals, in AL and GNG in few animals (at protein level).

It is found in the secreted. The protein is Insulin-related peptide 4 of Agrotis ipsilon (Black cutworm moth).